The chain runs to 258 residues: UDP-2,3-diacylglucosamine hydrolase (258 aa).

Mn(2+) is bound by residues Asp15, His17, Asp48, Asn88, and His123. 88 to 89 is a substrate binding site; the sequence is NR. The substrate site is built by Asp131, Ser169, Asn173, Lys176, and His204. Residues His204 and His206 each coordinate Mn(2+).

This sequence belongs to the LpxH family. Mn(2+) is required as a cofactor.

It localises to the cell inner membrane. The enzyme catalyses UDP-2-N,3-O-bis[(3R)-3-hydroxytetradecanoyl]-alpha-D-glucosamine + H2O = 2-N,3-O-bis[(3R)-3-hydroxytetradecanoyl]-alpha-D-glucosaminyl 1-phosphate + UMP + 2 H(+). The protein operates within glycolipid biosynthesis; lipid IV(A) biosynthesis; lipid IV(A) from (3R)-3-hydroxytetradecanoyl-[acyl-carrier-protein] and UDP-N-acetyl-alpha-D-glucosamine: step 4/6. In terms of biological role, hydrolyzes the pyrophosphate bond of UDP-2,3-diacylglucosamine to yield 2,3-diacylglucosamine 1-phosphate (lipid X) and UMP by catalyzing the attack of water at the alpha-P atom. Involved in the biosynthesis of lipid A, a phosphorylated glycolipid that anchors the lipopolysaccharide to the outer membrane of the cell. The sequence is that of UDP-2,3-diacylglucosamine hydrolase from Bordetella pertussis (strain Tohama I / ATCC BAA-589 / NCTC 13251).